Reading from the N-terminus, the 250-residue chain is Protein lin-28 homolog B (250 aa).

A disordered region spans residues 1 to 26 (MAEGGASKGGGEEPGKLPEPAEEESQ). One can recognise a CSD domain in the interval 29–102 (RGTGHCKWFN…GLESIRVTGP (74 aa)). Ser-54, Ser-96, Ser-105, and Ser-110 each carry phosphoserine. Residues 98 to 126 (RVTGPGGSPCLGSERRPKGKTLQKRKPKG) form a disordered region. The Bipartite nuclear localization signal signature appears at 112–125 (RRPKGKTLQKRKPK). Residues 114–125 (PKGKTLQKRKPK) are compositionally biased toward basic residues. 2 consecutive CCHC-type zinc fingers follow at residues 127–144 (DRCYNCGGLDHHAKECSL) and 149–166 (KKCHYCQSIMHMVANCPH). Zn(2+) is bound by residues Cys-129, Cys-132, His-137, Cys-142, Cys-151, Cys-154, His-159, and Cys-164. The tract at residues 169–250 (VAQPPASSQG…GPSVQKRKKT (82 aa)) is disordered. A compositionally biased stretch (polar residues) spans 173–191 (PASSQGRQEAESQPCTSTL). Residue Ser-203 is modified to Phosphoserine. Positions 210–219 (ARAEISERSG) are enriched in basic and acidic residues. Over residues 220 to 231 (RSPQEASSTKSS) the composition is skewed to polar residues. The Nucleolar localization signal motif lies at 239–250 (KKGPSVQKRKKT).

This sequence belongs to the lin-28 family. Expressed at high levels in the placenta and, at mucher lower, in testis and fetal liver. Isoform 1 is only detected in placenta and in moderately and poorly differentiated hepatocellular carcinoma cells (at protein level). Isoform 2 is detected in fetal liver, non-tumor liver tissues, as well as well-differentiated tumor tissues (at protein level). Tends to be up-regulated in triple-negative (ER-,PR-,HER2-) breast tumors, as well as in liver, ovarian, and thyroid carcinomas.

It localises to the nucleus. The protein localises to the nucleolus. It is found in the cytoplasm. Its function is as follows. Suppressor of microRNA (miRNA) biogenesis, including that of let-7 and possibly of miR107, miR-143 and miR-200c. Binds primary let-7 transcripts (pri-let-7), including pri-let-7g and pri-let-7a-1, and sequester them in the nucleolus, away from the microprocessor complex, hence preventing their processing into mature miRNA. Does not act on pri-miR21. The repression of let-7 expression is required for normal development and contributes to maintain the pluripotent state of embryonic stem cells by preventing let-7-mediated differentiation. When overexpressed, recruits ZCCHC11/TUT4 uridylyltransferase to pre-let-7 transcripts, leading to their terminal uridylation and degradation. This activity might not be relevant in vivo, as LIN28B-mediated inhibition of let-7 miRNA maturation appears to be ZCCHC11-independent. Interaction with target pre-miRNAs occurs via an 5'-GGAG-3' motif in the pre-miRNA terminal loop. Mediates MYC-induced let-7 repression. When overexpressed, isoform 1 stimulates growth of the breast adenocarcinoma cell line MCF-7. Isoform 2 has no effect on cell growth. In Homo sapiens (Human), this protein is Protein lin-28 homolog B (LIN28B).